We begin with the raw amino-acid sequence, 481 residues long: Proline--tRNA ligase (481 aa).

The protein belongs to the class-II aminoacyl-tRNA synthetase family. ProS type 3 subfamily. Homodimer.

Its subcellular location is the cytoplasm. The catalysed reaction is tRNA(Pro) + L-proline + ATP = L-prolyl-tRNA(Pro) + AMP + diphosphate. Catalyzes the attachment of proline to tRNA(Pro) in a two-step reaction: proline is first activated by ATP to form Pro-AMP and then transferred to the acceptor end of tRNA(Pro). In Chloroherpeton thalassium (strain ATCC 35110 / GB-78), this protein is Proline--tRNA ligase.